The chain runs to 383 residues: Cell division protein FtsZ (383 aa).

GTP contacts are provided by residues 20–24 (GGGGN), 107–109 (GTG), E138, R142, and N186.

This sequence belongs to the FtsZ family. Homodimer. Polymerizes to form a dynamic ring structure in a strictly GTP-dependent manner. Interacts directly with several other division proteins.

Its subcellular location is the cytoplasm. In terms of biological role, essential cell division protein that forms a contractile ring structure (Z ring) at the future cell division site. The regulation of the ring assembly controls the timing and the location of cell division. One of the functions of the FtsZ ring is to recruit other cell division proteins to the septum to produce a new cell wall between the dividing cells. Binds GTP and shows GTPase activity. This is Cell division protein FtsZ from Shigella flexneri.